Consider the following 457-residue polypeptide: MDHLPIFCQLRDRDCLIVGGGDVAERKARLLLEAGARLTVNALTFIPQFTVWANEGMLTLVEGPFDETLLDSCWLAIAATDDDTVNQRVSDAAESRRIFCNVVDAPKAASFIMPSIIDRSPLMVAVSSGGTSPVLARLLREKLESLLPQHLGQVARYAGQLRARVKKQFATMGERRRFWEKFFVNDRLAQSLANADEKAVNATTERLFSEPLDHRGEVVLVGAGPGDAGLLTLKGLQQIQQADIVVYDRLVSDDIMNLVRRDADRVFVGKRAGYHCVPQEEINQILLREAQKGKRVVRLKGGDPFIFGRGGEELETLCHAGIPFSVVPGITAASGCSAYSGIPLTHRDYAQSVRLVTGHLKTGGELDWENLAAEKQTLVFYMGLNQAATIQEKLIAFGMQADMPVALVENGTSVKQRVVHGVLTQLGELAQQVESPALIIVGRVVGLRDKLNWFSNY.

The tract at residues 1 to 204 (MDHLPIFCQL…ADEKAVNATT (204 aa)) is precorrin-2 dehydrogenase /sirohydrochlorin ferrochelatase. NAD(+) contacts are provided by residues 22-23 (DV) and 43-44 (LT). A Phosphoserine modification is found at serine 128. Residues 216–457 (GEVVLVGAGP…RDKLNWFSNY (242 aa)) form a uroporphyrinogen-III C-methyltransferase region. Proline 225 is a binding site for S-adenosyl-L-methionine. Catalysis depends on aspartate 248, which acts as the Proton acceptor. Lysine 270 functions as the Proton donor in the catalytic mechanism. Residues 301–303 (GGD), isoleucine 306, 331–332 (TA), methionine 382, and glycine 411 each bind S-adenosyl-L-methionine.

This sequence in the N-terminal section; belongs to the precorrin-2 dehydrogenase / sirohydrochlorin ferrochelatase family. In the C-terminal section; belongs to the precorrin methyltransferase family.

It catalyses the reaction uroporphyrinogen III + 2 S-adenosyl-L-methionine = precorrin-2 + 2 S-adenosyl-L-homocysteine + H(+). It carries out the reaction precorrin-2 + NAD(+) = sirohydrochlorin + NADH + 2 H(+). The enzyme catalyses siroheme + 2 H(+) = sirohydrochlorin + Fe(2+). Its pathway is cofactor biosynthesis; adenosylcobalamin biosynthesis; precorrin-2 from uroporphyrinogen III: step 1/1. It participates in cofactor biosynthesis; adenosylcobalamin biosynthesis; sirohydrochlorin from precorrin-2: step 1/1. It functions in the pathway porphyrin-containing compound metabolism; siroheme biosynthesis; precorrin-2 from uroporphyrinogen III: step 1/1. The protein operates within porphyrin-containing compound metabolism; siroheme biosynthesis; siroheme from sirohydrochlorin: step 1/1. Its pathway is porphyrin-containing compound metabolism; siroheme biosynthesis; sirohydrochlorin from precorrin-2: step 1/1. Its function is as follows. Multifunctional enzyme that catalyzes the SAM-dependent methylations of uroporphyrinogen III at position C-2 and C-7 to form precorrin-2 via precorrin-1. Then it catalyzes the NAD-dependent ring dehydrogenation of precorrin-2 to yield sirohydrochlorin. Finally, it catalyzes the ferrochelation of sirohydrochlorin to yield siroheme. This is Siroheme synthase from Salmonella choleraesuis (strain SC-B67).